The sequence spans 1065 residues: MIREPEFREYNPGQLEEKIEAFWKENNTYEKVKKLRENGPKYYFLDGPPYVSGAIHLGTAWNKIIKDMIIRFRSMQGYNVRRQPGFDMHGLPIEVKVEQALKLKNKREIETKIGVDNFIKKCKEFALNNLKIMTEQFKQLGVWMDWDNPYMTIKNEYIESGWFTLKRAWEKGLLEKDKRVLHWCPRCQTALAEHEVRGEYKMRKDPSIYVKFPIEWKEKEYLLIWTTTPWTLPANLAVAAHPEYEYAKVKVETENGEEYWIMAKALVERVLSEVGVKGEIVETFKGEELEGIRYTHVLLEEYPAQKEFREKYEWAHRVILGEHVTLEDGTGLVHTAPGHGEEDFEVGQRYGLPVYSPVDDAGRYTEGKWKGVYVKDADPEIIEYLKEKGYLVKAGEIEHKYPHCWRCKTPLIFRATDQWFLKVSKVKDQIIKENDEKVTWYPEWVKVRYDNGVMNSGDWVISRQRYWGIPLPIWESEDGEYYVVGSFEELVKLAVAIEVNGERIDLPEGYEEKLKIIEEKLGPEDLHRPYVDAFIIKVNGKEMKRVKDVVDVWFDSGIASWASLDYPRNKELFEKLWPADFIVEGEDQVTKWFYSQQAASVIAFDTVPYRAVAMHGYVLDEKGDKMSKSLGNIIRPEEVVQKEGRDPFRFYMLWATNPWENLRFSWKGLEQVKRMLNILWNVYVLSATYMSLDNFNPTKVNPEELPFREEDRWILSRVNSLIGEVTDGIETFRLTRATRGIYNFVVEDLSRWYIRLIRKRMWVEGDDPDKLAAYYTVWKVFDVLLRLMAPFTPYIAEEIYQNLIRPFVGVESVHMLDWPEADEKAIDEELEKEMEYARKIVEAGSSARQKARIKLRYPVRRIIIETEDETVKKAVERINRILRDQLNAKEVVVGKVERELIIKPNFAKVGPEFKGDAKKVIAWISEHGRELYEKGEMDVEIEGKTFHITREHVTIEEKLPDFFVAEEFDGGRVFVDKTLTRELLAEGLAREFVRRIQEMRKRLDLDVNDRIVVTIETTDENRELLQENLDYIMRETRAVEVRFEEAKGYVVEWPEVQAKIGIEKV.

The 'HIGH' region motif lies at 49–59 (PYVSGAIHLGT). A 'KMSKS' region motif is present at residues 625 to 629 (KMSKS). ATP is bound at residue K628.

The protein belongs to the class-I aminoacyl-tRNA synthetase family. IleS type 2 subfamily. Monomer. Zn(2+) serves as cofactor.

It localises to the cytoplasm. It carries out the reaction tRNA(Ile) + L-isoleucine + ATP = L-isoleucyl-tRNA(Ile) + AMP + diphosphate. In terms of biological role, catalyzes the attachment of isoleucine to tRNA(Ile). As IleRS can inadvertently accommodate and process structurally similar amino acids such as valine, to avoid such errors it has two additional distinct tRNA(Ile)-dependent editing activities. One activity is designated as 'pretransfer' editing and involves the hydrolysis of activated Val-AMP. The other activity is designated 'posttransfer' editing and involves deacylation of mischarged Val-tRNA(Ile). This is Isoleucine--tRNA ligase from Thermococcus kodakarensis (strain ATCC BAA-918 / JCM 12380 / KOD1) (Pyrococcus kodakaraensis (strain KOD1)).